The chain runs to 285 residues: MTAQIIDGKLISQTVRSEVGARVKARVEAGLRAPGLAVVLVGQDPASQVYVGSKRRACEEVGFVSKSYDLPTTTSESELLNLIDELNQDPEIDGILVQLPLPAGMDSTKILEHIDPEKDVDGFHPYNVGRLSQRIPKLRSCTPKGIITLLDRYNIQVRGMHAVVVGASNIVGRPMTLELLLAGCTTTTCHRFTKDLESHIRQADLVVVAVGKPNFIPGEWIKEGAVVVDVGINRLDSGKLIGDVEYDVAKTKASYITPVPGGVGPMTVATLIENTLLACEQYHSK.

Residues 166–168 and Ile-232 each bind NADP(+); that span reads GAS.

Belongs to the tetrahydrofolate dehydrogenase/cyclohydrolase family. Homodimer.

The enzyme catalyses (6R)-5,10-methylene-5,6,7,8-tetrahydrofolate + NADP(+) = (6R)-5,10-methenyltetrahydrofolate + NADPH. It catalyses the reaction (6R)-5,10-methenyltetrahydrofolate + H2O = (6R)-10-formyltetrahydrofolate + H(+). The protein operates within one-carbon metabolism; tetrahydrofolate interconversion. In terms of biological role, catalyzes the oxidation of 5,10-methylenetetrahydrofolate to 5,10-methenyltetrahydrofolate and then the hydrolysis of 5,10-methenyltetrahydrofolate to 10-formyltetrahydrofolate. This chain is Bifunctional protein FolD, found in Aliivibrio fischeri (strain MJ11) (Vibrio fischeri).